A 233-amino-acid chain; its full sequence is MIDPGHGGQDPGAINSLGLQEKKITLKIGIKLKNLLQNSDLFYPVLTRNDDSYVSLKKRRDFLKNNHVSFLISIHADSSKKRYVSGASIWITTNDRMHREINNFIKNREENIYFPKNIQNLIQKNKHDFFLKKTVLDLQFNNFQKMEINLSRYIFQQLKKIIKLDKINLNYASLGILSSINTPSMLIETGFITNFLEEKKLRTNKYQNKIANAIYIALKNYFQDRLLSNLRNT.

Residues 1 to 219 enclose the MurNAc-LAA domain; sequence MIDPGHGGQD…IANAIYIALK (219 aa).

It belongs to the N-acetylmuramoyl-L-alanine amidase 3 family.

The protein localises to the secreted. The enzyme catalyses Hydrolyzes the link between N-acetylmuramoyl residues and L-amino acid residues in certain cell-wall glycopeptides.. In terms of biological role, cell-wall hydrolase involved in septum cleavage during cell division. The sequence is that of Putative N-acetylmuramoyl-L-alanine amidase (amiB) from Buchnera aphidicola subsp. Schizaphis graminum (strain Sg).